Consider the following 224-residue polypeptide: Ribose-5-phosphate isomerase A (224 aa).

Substrate contacts are provided by residues 33-36 (TGST), 86-89 (DGAD), and 99-102 (KGGG). The active-site Proton acceptor is glutamate 108. Residue lysine 126 participates in substrate binding.

It belongs to the ribose 5-phosphate isomerase family. In terms of assembly, homodimer.

It carries out the reaction aldehydo-D-ribose 5-phosphate = D-ribulose 5-phosphate. It functions in the pathway carbohydrate degradation; pentose phosphate pathway; D-ribose 5-phosphate from D-ribulose 5-phosphate (non-oxidative stage): step 1/1. Functionally, catalyzes the reversible conversion of ribose-5-phosphate to ribulose 5-phosphate. In Bordetella avium (strain 197N), this protein is Ribose-5-phosphate isomerase A.